A 381-amino-acid polypeptide reads, in one-letter code: Erythronate-4-phosphate dehydrogenase (381 aa).

Residues Ser45 and Thr67 each contribute to the substrate site. NAD(+)-binding positions include 127 to 128 (QV), Asp147, and Thr176. Residue Arg209 is part of the active site. Residue Asp233 participates in NAD(+) binding. The active site involves Glu238. The active-site Proton donor is His255. Gly258 is an NAD(+) binding site. Residue Tyr259 coordinates substrate.

The protein belongs to the D-isomer specific 2-hydroxyacid dehydrogenase family. PdxB subfamily. Homodimer.

The protein resides in the cytoplasm. The catalysed reaction is 4-phospho-D-erythronate + NAD(+) = (R)-3-hydroxy-2-oxo-4-phosphooxybutanoate + NADH + H(+). It participates in cofactor biosynthesis; pyridoxine 5'-phosphate biosynthesis; pyridoxine 5'-phosphate from D-erythrose 4-phosphate: step 2/5. Catalyzes the oxidation of erythronate-4-phosphate to 3-hydroxy-2-oxo-4-phosphonooxybutanoate. In Vibrio cholerae serotype O1 (strain ATCC 39315 / El Tor Inaba N16961), this protein is Erythronate-4-phosphate dehydrogenase.